Reading from the N-terminus, the 302-residue chain is N-acetylmuramic acid 6-phosphate etherase (302 aa).

The SIS domain occupies 55–218 (AYPKFDQGGR…STGIMVKSGK (164 aa)). Glutamate 83 (proton donor) is an active-site residue. Glutamate 114 is a catalytic residue.

This sequence belongs to the GCKR-like family. MurNAc-6-P etherase subfamily. As to quaternary structure, homodimer.

The catalysed reaction is N-acetyl-D-muramate 6-phosphate + H2O = N-acetyl-D-glucosamine 6-phosphate + (R)-lactate. It functions in the pathway amino-sugar metabolism; N-acetylmuramate degradation. In terms of biological role, specifically catalyzes the cleavage of the D-lactyl ether substituent of MurNAc 6-phosphate, producing GlcNAc 6-phosphate and D-lactate. The sequence is that of N-acetylmuramic acid 6-phosphate etherase from Levilactobacillus brevis (strain ATCC 367 / BCRC 12310 / CIP 105137 / JCM 1170 / LMG 11437 / NCIMB 947 / NCTC 947) (Lactobacillus brevis).